Here is a 562-residue protein sequence, read N- to C-terminus: Arginine--tRNA ligase 2 (562 aa).

The 'HIGH' region motif lies at 122–132 (PNIAKPFSMGH).

It belongs to the class-I aminoacyl-tRNA synthetase family. In terms of assembly, monomer.

It is found in the cytoplasm. The catalysed reaction is tRNA(Arg) + L-arginine + ATP = L-arginyl-tRNA(Arg) + AMP + diphosphate. This chain is Arginine--tRNA ligase 2 (argS2), found in Bacillus anthracis.